The following is a 1687-amino-acid chain: Gag-Pol polyprotein (1687 aa).

The N-myristoyl glycine; by host moiety is linked to residue G2. Disordered stretches follow at residues 106 to 197 and 420 to 490; these read SSPE…VILP and HKRE…LDKD. The PTAP/PSAP motif signature appears at 108–111; that stretch reads PENT. A compositionally biased stretch (pro residues) spans 139 to 157; sequence EPPPYPAALPPPLAPPAVG. The PPXY motif signature appears at 140–143; that stretch reads PPPY. Residues 408–455 are a coiled coil; that stretch reads LQDLVREAEKVYHKRETEEERQEREKKEAEERERRRDRRQEKNLTRIL. 2 stretches are compositionally biased toward basic and acidic residues: residues 420-451 and 479-490; these read HKRE…EKNL and TPRDGRPPLDKD. The CCHC-type zinc-finger motif lies at 490-507; that stretch reads DQCAYCKEKGHWARECPQ. A Peptidase A2 domain is found at 544 to 614; that stretch reads IEFLVDTGAE…CPAPLLGRDL (71 aa). The active-site Protease; shared with dimeric partner is the D549. The 192-residue stretch at 721–912 folds into the Reverse transcriptase domain; sequence LDLGVLVPCQ…KEVTYLGYLL (192 aa). Mg(2+)-binding residues include D789, D863, D864, D1180, E1200, D1221, and D1291. The RNase H type-1 domain occupies 1153–1299; that stretch reads LPGVPAWYTD…ADEAAKQAAL (147 aa). An HHCC-type zinc finger spans residues 1339–1377; it reads HQLTHLGPEKLLQLVNRTSLLIPNLQSAVREVTSQCQAC. In terms of domain architecture, Integrase catalytic spans 1394–1552; that stretch reads RGDRPGVYWE…TPYEILYGGP (159 aa). Mg(2+)-binding residues include D1405 and D1464.

It belongs to the retroviral Pol polyprotein family. Homohexamer; further associates as homomultimer. The virus core is composed of a lattice formed from hexagonal rings, each containing six capsid monomers. As to quaternary structure, interacts (via PPXY motif) with host NEDD4. Interacts (via PSAP motif) with host TSG101. In terms of assembly, the reverse transcriptase is a monomer (Potential). Interacts (via RNase domains) with host release factor ETF1; this interaction is essential for translational readthrough of amber codon between viral gag and pol genes, as well as for viral replication. Homodimer. Mg(2+) serves as cofactor. Post-translationally, specific enzymatic cleavages by the viral protease yield mature proteins. The protease is released by autocatalytic cleavage. The polyprotein is cleaved during and after budding, this process is termed maturation. In terms of processing, phosphorylated on serine residues.

Its subcellular location is the virion. It is found in the host cell membrane. The protein localises to the host late endosome membrane. It localises to the host endosome. The protein resides in the host multivesicular body. Its subcellular location is the host cytoplasm. It catalyses the reaction DNA(n) + a 2'-deoxyribonucleoside 5'-triphosphate = DNA(n+1) + diphosphate. It carries out the reaction Endonucleolytic cleavage to 5'-phosphomonoester.. With respect to regulation, most efficiently inhibited by Amprenavir, which is able to block Gag-Pol processing in infected cells. In terms of biological role, plays a role in budding and is processed by the viral protease during virion maturation outside the cell. During budding, it recruits, in a PPXY-dependent or independent manner, Nedd4-like ubiquitin ligases that conjugate ubiquitin molecules to Gag-Pol, or to Gag-Pol binding host factors. Interaction with HECT ubiquitin ligases probably links the viral protein to the host ESCRT pathway and facilitates release. Targets Gag and gag-pol polyproteins to the plasma membrane via a multipartite membrane binding signal, that includes its myristoylated N-terminus. Also mediates nuclear localization of the pre-integration complex. Its function is as follows. Constituent of the pre-integration complex (PIC) which tethers the latter to mitotic chromosomes. This allows the integration of the viral genome into the host DNA. Functionally, forms the spherical core of the virion that encapsulates the genomic RNA-nucleocapsid complex. In terms of biological role, involved in the packaging and encapsidation of two copies of the genome. Binds with high affinity to conserved UCUG elements within the packaging signal, located near the 5'-end of the genome. This binding is dependent on genome dimerization. Acts as a nucleic acid chaperone which is involved in rearrangement of nucleic acid secondary structures during gRNA retrotranscription. The aspartyl protease mediates proteolytic cleavages of Gag and Gag-Pol polyproteins during or shortly after the release of the virion from the plasma membrane. Cleavages take place as an ordered, step-wise cascade to yield mature proteins. This process is called maturation. Displays maximal activity during the budding process just prior to particle release from the cell. Its function is as follows. RT is a multifunctional enzyme that converts the viral dimeric RNA genome into dsDNA in the cytoplasm, shortly after virus entry into the cell. This enzyme displays a DNA polymerase activity that can copy either DNA or RNA templates, and a ribonuclease H (RNase H) activity that cleaves the RNA strand of RNA-DNA heteroduplexes in a partially processive 3' to 5' endonucleasic mode. Conversion of viral genomic RNA into dsDNA requires many steps. A tRNA binds to the primer-binding site (PBS) situated at the 5' end of the viral RNA. RT uses the 3' end of the tRNA primer to perform a short round of RNA-dependent minus-strand DNA synthesis. The reading proceeds through the U5 region and ends after the repeated (R) region which is present at both ends of viral RNA. The portion of the RNA-DNA heteroduplex is digested by the RNase H, resulting in a ssDNA product attached to the tRNA primer. This ssDNA/tRNA hybridizes with the identical R region situated at the 3' end of viral RNA. This template exchange, known as minus-strand DNA strong stop transfer, can be either intra- or intermolecular. RT uses the 3' end of this newly synthesized short ssDNA to perform the RNA-dependent minus-strand DNA synthesis of the whole template. RNase H digests the RNA template except for a polypurine tract (PPT) situated at the 5' end of the genome. It is not clear if both polymerase and RNase H activities are simultaneous. RNase H probably can proceed both in a polymerase-dependent (RNA cut into small fragments by the same RT performing DNA synthesis) and a polymerase-independent mode (cleavage of remaining RNA fragments by free RTs). Secondly, RT performs DNA-directed plus-strand DNA synthesis using the PPT that has not been removed by RNase H as primers. PPT and tRNA primers are then removed by RNase H. The 3' and 5' ssDNA PBS regions hybridize to form a circular dsDNA intermediate. Strand displacement synthesis by RT to the PBS and PPT ends produces a blunt ended, linear dsDNA copy of the viral genome that includes long terminal repeats (LTRs) at both ends. Functionally, catalyzes viral DNA integration into the host chromosome, by performing a series of DNA cutting and joining reactions. This enzyme activity takes place after virion entry into a cell and reverse transcription of the RNA genome in dsDNA. The first step in the integration process is 3' processing. This step requires a complex comprising the viral genome, matrix protein and integrase. This complex is called the pre-integration complex (PIC). The integrase protein removes 2 nucleotides from each 3' end of the viral DNA, leaving recessed CA OH's at the 3' ends. In the second step that requires cell division, the PIC enters cell nucleus. In the third step, termed strand transfer, the integrase protein joins the previously processed 3' ends to the 5' ends of strands of target cellular DNA at the site of integration. The last step is viral DNA integration into host chromosome. In Woolly monkey sarcoma virus (WMSV), this protein is Gag-Pol polyprotein (pol).